The chain runs to 54 residues: Photosystem II reaction center protein K (54 aa).

Positions 1-17 (MSFITLNNFFNTNTFFG) are excised as a propeptide. Residues 29 to 49 (LIDVLPIIPVLFFLLAFVWQA) form a helical membrane-spanning segment.

It belongs to the PsbK family. As to quaternary structure, PSII is composed of 1 copy each of membrane proteins PsbA, PsbB, PsbC, PsbD, PsbE, PsbF, PsbH, PsbI, PsbJ, PsbK, PsbL, PsbM, PsbT, PsbY, PsbZ, Psb30/Ycf12, at least 3 peripheral proteins of the oxygen-evolving complex and a large number of cofactors. It forms dimeric complexes.

The protein localises to the plastid. It localises to the chloroplast thylakoid membrane. Functionally, one of the components of the core complex of photosystem II (PSII). PSII is a light-driven water:plastoquinone oxidoreductase that uses light energy to abstract electrons from H(2)O, generating O(2) and a proton gradient subsequently used for ATP formation. It consists of a core antenna complex that captures photons, and an electron transfer chain that converts photonic excitation into a charge separation. The protein is Photosystem II reaction center protein K of Euglena gracilis.